The chain runs to 76 residues: Defensin-like protein 125 (76 aa).

Residues 1 to 25 (MTKAITLAIFMVVLVLGMVTKETQG) form the signal peptide. 4 disulfide bridges follow: cysteine 30–cysteine 74, cysteine 41–cysteine 60, cysteine 46–cysteine 68, and cysteine 50–cysteine 70.

Belongs to the DEFL family.

The protein resides in the secreted. The polypeptide is Defensin-like protein 125 (LCR54) (Arabidopsis thaliana (Mouse-ear cress)).